Here is a 535-residue protein sequence, read N- to C-terminus: Alpha-1,3-mannosyl-glycoprotein 4-beta-N-acetylglucosaminyltransferase A (535 aa).

The Cytoplasmic portion of the chain corresponds to 1-6 (MRLRNG). The chain crosses the membrane as a helical; Signal-anchor for type II membrane protein span at residues 7 to 27 (TVATVLVFITTFLSLSWYTAW). Residues 28–54 (QNGKEKLIAYQREFHALKERLRIAEHR) adopt a coiled-coil conformation. The Lumenal segment spans residues 28–535 (QNGKEKLIAY…NEIHIKKMTN (508 aa)). Residues N77, N85, and N458 are each glycosylated (N-linked (GlcNAc...) asparagine).

This sequence belongs to the glycosyltransferase 54 family. The cofactor is a divalent metal cation. Post-translationally, N-glycosylated.

The protein resides in the golgi apparatus membrane. Its subcellular location is the secreted. The enzyme catalyses N(4)-{beta-D-GlcNAc-(1-&gt;2)-alpha-D-Man-(1-&gt;3)-[beta-D-GlcNAc-(1-&gt;2)-alpha-D-Man-(1-&gt;6)]-beta-D-Man-(1-&gt;4)-beta-D-GlcNAc-(1-&gt;4)-beta-D-GlcNAc}-L-asparaginyl-[protein] + UDP-N-acetyl-alpha-D-glucosamine = N(4)-{beta-D-GlcNAc-(1-&gt;2)-[beta-D-GlcNAc-(1-&gt;4)]-alpha-D-Man-(1-&gt;3)-[beta-D-GlcNAc-(1-&gt;2)-alpha-D-Man-(1-&gt;6)]-beta-D-Man-(1-&gt;4)-beta-D-GlcNAc-(1-&gt;4)-beta-D-GlcNAc}-L-asparaginyl-[protein] + UDP + H(+). It catalyses the reaction an N(4)-{beta-D-GlcNAc-(1-&gt;2)-alpha-D-Man-(1-&gt;3)-[alpha-D-Man-(1-&gt;6)]-beta-D-Man-(1-&gt;4)-beta-D-GlcNAc-(1-&gt;4)-beta-D-GlcNAc}-L-asparaginyl-[protein] + UDP-N-acetyl-alpha-D-glucosamine = an N(4)-{beta-D-GlcNAc-(1-&gt;2)-[beta-D-GlcNAc-(1-&gt;4)]-alpha-D-Man-(1-&gt;3)-[alpha-D-Man-(1-&gt;6)]-beta-D-Man-(1-&gt;4)-beta-D-GlcNAc-(1-&gt;4)-beta-D-GlcNAc}-L-asparaginyl-[protein] + UDP + H(+). It carries out the reaction an N(4)-{beta-D-GlcNAc-(1-&gt;2)-alpha-D-Man-(1-&gt;3)-[beta-D-GlcNAc-(1-&gt;2)-[beta-D-GlcNAc-(1-&gt;6)]-alpha-D-Man-(1-&gt;6)]-beta-D-Man-(1-&gt;4)-beta-D-GlcNAc-(1-&gt;4)-beta-D-GlcNAc}-L-asparaginyl-[protein] + UDP-N-acetyl-alpha-D-glucosamine = an N(4)-{beta-D-GlcNAc-(1-&gt;2)-[beta-D-GlcNAc-(1-&gt;4)]-alpha-D-Man-(1-&gt;3)-[beta-D-GlcNAc-(1-&gt;2)-[beta-D-GlcNAc-(1-&gt;6)]-alpha-D-Man-(1-&gt;6)]-beta-D-Man-(1-&gt;4)-beta-D-GlcNAc-(1-&gt;4)-beta-D-GlcNAc}-L-asparaginyl-[protein] + UDP + H(+). The catalysed reaction is an N(4)-{beta-D-GlcNAc-(1-&gt;2)-alpha-D-Man-(1-&gt;3)-[beta-D-GlcNAc-(1-&gt;2)-alpha-D-Man-(1-&gt;6)]-beta-D-Man-(1-&gt;4)-beta-D-GlcNAc-(1-&gt;4)-[alpha-L-Fuc-(1-&gt;6)]-beta-D-GlcNAc}-L-asparaginyl-[protein] + UDP-N-acetyl-alpha-D-glucosamine = N(4)-{beta-D-GlcNAc-(1-&gt;2)-[beta-D-GlcNAc-(1-&gt;4)]-alpha-D-Man-(1-&gt;3)-[beta-D-GlcNAc-(1-&gt;2)-alpha-D-Man-(1-&gt;6)]-beta-D-Man-(1-&gt;4)-beta-D-GlcNAc-(1-&gt;4)-[alpha-L-Fuc-(1-&gt;6)]-beta-D-GlcNAc}-asparaginyl-[protein] + UDP + H(+). The enzyme catalyses an N(4)-{beta-D-GlcNAc-(1-&gt;2)-alpha-D-Man-(1-&gt;3)-[beta-D-Gal-(1-&gt;4)-beta-D-GlcNAc-(1-&gt;2)-alpha-D-Man-(1-&gt;6)]-beta-D-Man-(1-&gt;4)-beta-D-GlcNAc-(1-&gt;4)-beta-D-GlcNAc}-L-asparaginyl-[protein] + UDP-N-acetyl-alpha-D-glucosamine = an N(4)-{beta-D-GlcNAc-(1-&gt;2)-[beta-D-GlcNAc-(1-&gt;4)]-alpha-D-Man-(1-&gt;3)-[beta-D-Gal-(1-&gt;4)-beta-D-GlcNAc-(1-&gt;2)-alpha-D-Man-(1-&gt;6)]-beta-D-Man-(1-&gt;4)-beta-D-GlcNAc-(1-&gt;4)-beta-D-GlcNAc}-L-asparaginyl-[protein] + UDP + H(+). It catalyses the reaction N(4)-{beta-D-GlcNAc-(1-&gt;2)-alpha-D-Man-(1-&gt;3)-[alpha-D-Man-(1-&gt;3)-{alpha-D-Man-(1-&gt;6)}-alpha-D-Man-(1-&gt;6)]-beta-D-Man-(1-&gt;4)-beta-D-GlcNAc-(1-&gt;4)-beta-D-GlcNAc}-asparaginyl-[protein] + UDP-N-acetyl-alpha-D-glucosamine = N(4)-{beta-D-GlcNAc-(1-&gt;2)-[beta-D-GlcNAc-(1-&gt;4)]-alpha-D-Man-(1-&gt;3)-[alpha-D-Man-(1-&gt;3)-{alpha-D-Man-(1-&gt;6)}-alpha-D-Man-(1-&gt;6)]-beta-D-Man-(1-&gt;4)-beta-D-GlcNAc-(1-&gt;4)-beta-D-GlcNAc}-asparaginyl-[protein] + UDP + H(+). It carries out the reaction N(4)-{beta-D-GlcNAc-(1-&gt;2)-alpha-D-Man-(1-&gt;3)-beta-D-Man-(1-&gt;4)-beta-D-GlcNAc-(1-&gt;4)-beta-D-GlcNAc}-asparaginyl-[protein] + UDP-N-acetyl-alpha-D-glucosamine = N(4)-{beta-D-GlcNAc-(1-&gt;2)-[beta-D-GlcNAc-(1-&gt;4)]-alpha-D-Man-(1-&gt;3)-beta-D-Man-(1-&gt;4)-beta-D-GlcNAc-(1-&gt;4)-beta-D-GlcNAc}-asparaginyl-[protein] + UDP + H(+). It functions in the pathway protein modification; protein glycosylation. Its activity is regulated as follows. Inhibited by UDP. Functionally, glycosyltransferase that catalyze the transfer of GlcNAc from UDP-GlcNAc to the GlcNAcbeta1-2Manalpha1-3 arm of the core structure of N-linked glycans through a beta1-4 linkage and participates in the production of tri- and tetra-antennary N-linked sugar chains. Involved in glucose transport by mediating SLC2A2/GLUT2 glycosylation, thereby controlling cell-surface expression of SLC2A2 in pancreatic beta cells. The chain is Alpha-1,3-mannosyl-glycoprotein 4-beta-N-acetylglucosaminyltransferase A from Gallus gallus (Chicken).